Reading from the N-terminus, the 280-residue chain is Large ribosomal subunit protein uL2cz/uL2cy (280 aa).

Disordered stretches follow at residues 1 to 25 (MAIHLYKTSTPSTRNGAVDSQVKSN) and 231 to 280 (PVDH…RRTK).

Belongs to the universal ribosomal protein uL2 family. As to quaternary structure, part of the 50S ribosomal subunit.

It localises to the plastid. The protein localises to the chloroplast. The polypeptide is Large ribosomal subunit protein uL2cz/uL2cy (rpl2-A) (Platanus occidentalis (Sycamore)).